Here is a 266-residue protein sequence, read N- to C-terminus: UPF0294 protein YafD (266 aa).

The protein belongs to the UPF0294 family.

Its subcellular location is the cytoplasm. This chain is UPF0294 protein YafD, found in Salmonella dublin (strain CT_02021853).